A 1003-amino-acid polypeptide reads, in one-letter code: NACHT, LRR and PYD domains-containing protein 9B (1003 aa).

The 91-residue stretch at 1–91 folds into the Pyrin domain; it reads MAGSSGYGLL…SIMAQKKKRH (91 aa). The region spanning 143 to 465 is the NACHT domain; the sequence is VTAIVAGTTG…QDKDICVPVI (323 aa). 149–156 lines the ATP pocket; sequence GTTGEGKT. LRR repeat units lie at residues 749–770, 778–799, 806–826, 835–856, 863–883, 892–913, and 920–940; these read KVKHLSLVENPLKNKGVMSLCE, VLQSLMLSYCCLTFIACGHLYE, HLSLLDLGSNFLEDTGVNLLC, TLKELWLPGCFLTSQCCEEISA, NLKTLKLGNNNIQDTGVRQLC, NLECLGLDLCEFTSDCCKDLAL, and TLNSLNLDWKTLDHSGLVVLC.

In terms of assembly, sensor component of NLRP9 inflammasomes. Inflammasomes are supramolecular complexes that assemble in the cytosol in response to pathogens, such as rotavirus, but not encephalomyocarditis virus (EMCV), and play critical roles in innate immunity and inflammation. The core of NLRP9 inflammasomes consists of a signal sensor component (NLRP9), an adapter (ASC/PYCARD), which recruits an effector pro-inflammatory caspase (CASP1). Within the complex, NLRP9 and PYCARD interact via their respective DAPIN/pyrin domains. This interaction initiates speck formation (nucleation) which greatly enhances further addition of soluble PYCARD molecules to the speck in a prion-like polymerization process. Clustered PYCARD nucleates the formation of CASP1 filaments through the interaction of their respective CARD domains, acting as a platform for CASP1 polymerization. CASP1 filament formation increases local enzyme concentration, resulting in trans-autocleavage and activation. Active CASP1 then processes IL1B and IL18 precursors, leading to the release of mature cytokines in the extracellular milieu and inflammatory response. Interacts with DHX9 upon rotavirus infection; this interaction may trigger inflammasome activation and inflammatory response. In terms of tissue distribution, predominantly expressed in the intestine, including proximal and distal colon, cecum, ileum, jejunum and duodenum (at protein level). In the ileum, expressed in epithelial cells. Also expressed in oocytes at all follicular stages and in preimplantation embryos (at protein level). Although expression decreases in preimplantation embryos, it is still detectable in blastocyts.

It is found in the cytoplasm. The protein localises to the inflammasome. Its function is as follows. As the sensor component of the NLRP9 inflammasome, plays a crucial role in innate immunity and inflammation. In response to pathogens, including rotavirus, initiates the formation of the inflammasome polymeric complex, made of NLRP9, PYCARD and CASP1. Recruitment of proCASP1 to the inflammasome promotes its activation and CASP1-catalyzed IL1B and IL18 maturation and release in the extracellular milieu. The active cytokines stimulate inflammatory responses. Inflammasomes can also induce pyroptosis, an inflammatory form of programmed cell death. NLRP9 inflammasome activation may be initiated by DHX9 interaction with viral double-stranded RNA (dsRNA), preferentially to short dsRNA segments. The polypeptide is NACHT, LRR and PYD domains-containing protein 9B (Nlrp9b) (Mus musculus (Mouse)).